The sequence spans 156 residues: Nucleosome assembly protein 1-like 5 (156 aa).

The segment covering 1–16 has biased composition (basic and acidic residues); it reads MADPEKQGPAESRAED. The interval 1–58 is disordered; the sequence is MADPEKQGPAESRAEDEVMEGAQGGEDAATGDSAAAPAAEEPQAPAENAPKPKKDFME. Over residues 34–49 the composition is skewed to low complexity; that stretch reads AAAPAAEEPQAPAENA. Residues 68-94 adopt a coiled-coil conformation; the sequence is VLALKKLQKRCDKIEAKFDKEFQALEK. Positions 120–156 are disordered; that stretch reads TLEGEDDEDDEEEDDEEEEEEEEAAAGATGGPNFAKK. The span at 122–143 shows a compositional bias: acidic residues; the sequence is EGEDDEDDEEEDDEEEEEEEEA.

This sequence belongs to the nucleosome assembly protein (NAP) family.

It localises to the nucleus. The chain is Nucleosome assembly protein 1-like 5 (Nap1l5) from Mus musculus (Mouse).